The chain runs to 160 residues: Nucleotide-binding protein CbuK_1936 (160 aa).

The protein belongs to the YajQ family.

Nucleotide-binding protein. In Coxiella burnetii (strain CbuK_Q154) (Coxiella burnetii (strain Q154)), this protein is Nucleotide-binding protein CbuK_1936.